The sequence spans 396 residues: Probable sugar efflux transporter (396 aa).

At 1–14 (MTTNTVSRKVAWLR) the chain is on the cytoplasmic side. The helical transmembrane segment at 15-35 (VVTLAVAAFIFNTTEFVPVGL) threads the bilayer. Residues 36 to 49 (LSDIAQSFHMQTAQ) are Periplasmic-facing. A helical membrane pass occupies residues 50-70 (VGIMLTIYAWVVALMSLPFML). The Cytoplasmic segment spans residues 71–80 (MTSQVERRKL). The chain crosses the membrane as a helical span at residues 81–101 (LICLFVVFIASHVLSFLSWSF). Position 102 (T102) is a topological domain, periplasmic. A helical transmembrane segment spans residues 103-123 (VLVISRIGVAFAHAIFWSITA). The Cytoplasmic segment spans residues 124–135 (SLAIRMAPAGKR). The chain crosses the membrane as a helical span at residues 136-156 (AQALSLIATGTALAMVLGLPL). Residues 157–169 (GRIVGQYFGWRMT) lie on the Periplasmic side of the membrane. The helical transmembrane segment at 170–190 (FFAIGIGALITLLCLIKLLPL) threads the bilayer. The Cytoplasmic segment spans residues 191–208 (LPSEHSGSLKSLPLLFRR). The helical transmembrane segment at 209 to 229 (PALMSIYLLTVVVVTAHYTAY) threads the bilayer. At 230-245 (SYIEPFVQNIAGFSAN) the chain is on the periplasmic side. A helical transmembrane segment spans residues 246–266 (FATALLLLLGGAGIIGSVIFG). Over 267–274 (KLGNQYAS) the chain is Cytoplasmic. The helical transmembrane segment at 275–295 (ALVSTAIALLLVCLALLLPAA) threads the bilayer. Over 296–298 (NSE) the chain is Periplasmic. A helical transmembrane segment spans residues 299–319 (IHLGVLSIFWGIAMMIIGLGM). The Cytoplasmic segment spans residues 320–332 (QVKVLALAPDATD). A helical membrane pass occupies residues 333–353 (VAMALFSGIFNIGIGAGALVG). Residues 354–363 (NQVSLHWSMS) lie on the Periplasmic side of the membrane. A helical membrane pass occupies residues 364–384 (MIGYVGTVPAFAALIWSIIIF). Residues 385–396 (RRWPVTLEEQTQ) are Cytoplasmic-facing.

This sequence belongs to the major facilitator superfamily. SotB (TC 2.A.1.2) family.

The protein resides in the cell inner membrane. Its function is as follows. Involved in the efflux of sugars. The physiological role may be the reduction of the intracellular concentration of toxic sugars or sugar metabolites. This chain is Probable sugar efflux transporter, found in Escherichia coli O157:H7.